We begin with the raw amino-acid sequence, 51 residues long: Light-harvesting protein B-800/850 beta chain (51 aa).

At 2–23 (ADDANKVWPSGLTTAEAEELQK) the chain is on the cytoplasmic side. Residues 24-46 (GLVDGTRVFGVIAVLAHILAYAY) traverse the membrane as a helical segment. A bacteriochlorophyll is bound at residue His40. At 47 to 51 (TPWLH) the chain is on the periplasmic side.

Belongs to the antenna complex beta subunit family. An alpha/beta heterodimer conjugated to 3 bacteriochlorophyll molecules. The core complex is formed by different alpha and beta chains, binding bacteriochlorophyll molecules, and arranged most probably in tetrameric structures disposed around the reaction center. The non-pigmented gamma chains may constitute additional components.

The protein resides in the cell inner membrane. Functionally, antenna complexes are light-harvesting systems, which transfer the excitation energy to the reaction centers. This Rubrivivax gelatinosus (Rhodocyclus gelatinosus) protein is Light-harvesting protein B-800/850 beta chain (pucB).